A 1305-amino-acid chain; its full sequence is Adenylate cyclase type 9 (1305 aa).

The Cytoplasmic segment spans residues 1 to 110; it reads MASPVNQQLL…CFPQTQRRFR (110 aa). A compositionally biased stretch (low complexity) spans 46–55; the sequence is ISSSCSSGES. The disordered stretch occupies residues 46 to 71; it reads ISSSCSSGESGVKKTGGSGGARRQKK. A helical transmembrane segment spans residues 111-131; sequence YALMYLSVAGLLWSIYFSVHM. The Extracellular segment spans residues 132-134; sequence KTK. A helical membrane pass occupies residues 135-155; that stretch reads LVSHLVPTLCFLIVCLGFFFF. Residues 156-164 lie on the Cytoplasmic side of the membrane; it reads TFTKSYARH. Residues 165–185 traverse the membrane as a helical segment; it reads CTAISLLVTLLVFTLTLASQF. Topologically, residues 186-209 are extracellular; it reads QVLNPGLGSDSLSNLTSFSATGSS. An N-linked (GlcNAc...) asparagine glycan is attached at N199. A helical membrane pass occupies residues 210-229; the sequence is SCLSQVGSFSICVEVLLLLY. Topologically, residues 230–235 are cytoplasmic; that stretch reads TVMHLP. Residues 236–253 traverse the membrane as a helical segment; it reads LYLSACLGVAYSILFETF. Topologically, residues 254 to 274 are extracellular; that stretch reads GYHFRDESCFVLLVGRMAHWE. The helical transmembrane segment at 275–295 threads the bilayer; that stretch reads LLSKALLHVCIHAIGVHLFIM. The Cytoplasmic segment spans residues 296–778; that stretch reads SEVRSRSTFL…VKTFASATFS (483 aa). Positions 343–369 are disordered; the sequence is QGDDESENSVKRHSASSPKSRKKKSSI. The segment covering 353–368 has biased composition (basic residues); that stretch reads KRHSASSPKSRKKKSS. D393, I394, and D437 together coordinate Mg(2+). ATP-binding positions include 393 to 398, 435 to 437, and R481; these read DIVGFT and LGD. 2 stretches are compositionally biased toward polar residues: residues 607 to 618 and 670 to 680; these read SDSHTNCTQPET and ESSTGDTLTNS. Residues 607-680 are disordered; the sequence is SDSHTNCTQP…SSTGDTLTNS (74 aa). Residues 779-799 form a helical membrane-spanning segment; the sequence is SLQDVLLNYFIFVLLSVACLL. The Extracellular portion of the chain corresponds to 800 to 810; sequence KPGTNTVSPPT. A helical membrane pass occupies residues 811–831; it reads LALVLLSVCGLLGFLSLLVSV. At 832–859 the chain is on the cytoplasmic side; that stretch reads RMAFYLEDMLLCTRRLLEIISGWVPRHF. Residues 860 to 880 traverse the membrane as a helical segment; that stretch reads IGTVLVCLPAAVIFSYLSSDF. Topologically, residues 881-883 are extracellular; it reads YTD. Residues 884–904 traverse the membrane as a helical segment; the sequence is IHYTMFLCSALLIPMVQYCNF. The Cytoplasmic segment spans residues 905–911; that stretch reads CQLSSSA. The helical transmembrane segment at 912–932 threads the bilayer; the sequence is LLLATITGATMLILIYLPLCP. The Extracellular portion of the chain corresponds to 933–966; it reads QRPPLDPGTDIEANLSTSNSSYETLDNPRTELPF. N-linked (GlcNAc...) asparagine glycans are attached at residues N946 and N951. A helical transmembrane segment spans residues 967–987; it reads TRLGQEIAVAYFLLLLLVWFL. At 988 to 1305 the chain is on the cytoplasmic side; sequence NREFDVSYRL…EERGRDGGAR (318 aa). Residues K1099, 1176-1178, 1183-1187, and K1223 contribute to the ATP site; these read DIW and NIASR. Positions 1261-1305 are disordered; that stretch reads SIGRSPTDEISSLVTGGKGAVELGSGEAERKREKAEERGRDGGAR. The span at 1287-1305 shows a compositional bias: basic and acidic residues; that stretch reads EAERKREKAEERGRDGGAR.

The protein belongs to the adenylyl cyclase class-4/guanylyl cyclase family. Requires Mg(2+) as cofactor. Mn(2+) serves as cofactor. In terms of tissue distribution, detected in oocytes.

It is found in the cell membrane. It carries out the reaction ATP = 3',5'-cyclic AMP + diphosphate. Its function is as follows. Adenylyl cyclase that catalyzes the formation of the signaling molecule cAMP in response to activation of G protein-coupled receptors. The sequence is that of Adenylate cyclase type 9 (adcy9) from Xenopus laevis (African clawed frog).